Consider the following 360-residue polypeptide: Peptide chain release factor 1 (360 aa).

Residue Q235 is modified to N5-methylglutamine. Residues 281-310 (AERQRQDAAQAESRRLQVGSGDRSQRIRTY) form a disordered region.

The protein belongs to the prokaryotic/mitochondrial release factor family. Methylated by PrmC. Methylation increases the termination efficiency of RF1.

It localises to the cytoplasm. Peptide chain release factor 1 directs the termination of translation in response to the peptide chain termination codons UAG and UAA. This Stenotrophomonas maltophilia (strain K279a) protein is Peptide chain release factor 1.